A 299-amino-acid chain; its full sequence is UDP-N-acetylenolpyruvoylglucosamine reductase (299 aa).

An FAD-binding PCMH-type domain is found at 28 to 193 (KVGGPADILA…LSAKFELQAG (166 aa)). Arginine 172 is an active-site residue. Serine 222 acts as the Proton donor in catalysis. Residue glutamate 292 is part of the active site.

It depends on FAD as a cofactor.

It localises to the cytoplasm. It carries out the reaction UDP-N-acetyl-alpha-D-muramate + NADP(+) = UDP-N-acetyl-3-O-(1-carboxyvinyl)-alpha-D-glucosamine + NADPH + H(+). The protein operates within cell wall biogenesis; peptidoglycan biosynthesis. Its function is as follows. Cell wall formation. The sequence is that of UDP-N-acetylenolpyruvoylglucosamine reductase from Lactococcus lactis subsp. cremoris (strain MG1363).